We begin with the raw amino-acid sequence, 1363 residues long: DNA-directed RNA polymerase subunit beta (1363 aa).

This sequence belongs to the RNA polymerase beta chain family. The RNAP catalytic core consists of 2 alpha, 1 beta, 1 beta' and 1 omega subunit. When a sigma factor is associated with the core the holoenzyme is formed, which can initiate transcription.

It catalyses the reaction RNA(n) + a ribonucleoside 5'-triphosphate = RNA(n+1) + diphosphate. DNA-dependent RNA polymerase catalyzes the transcription of DNA into RNA using the four ribonucleoside triphosphates as substrates. This is DNA-directed RNA polymerase subunit beta from Neorickettsia risticii (Ehrlichia risticii).